Reading from the N-terminus, the 458-residue chain is Transmembrane protein 143 (458 aa).

2 helical membrane passes run 277 to 297 (LLNL…GMVI) and 298 to 318 (LSDL…FMGV). Position 329 is a phosphoserine (Ser329).

The protein resides in the membrane. This Mus musculus (Mouse) protein is Transmembrane protein 143 (Tmem143).